We begin with the raw amino-acid sequence, 433 residues long: Minor capsid protein (433 aa).

Residues 353 to 419 enclose the BIG2 domain; it reads TGVTLSQKTM…ADITATTSNG (67 aa).

This sequence belongs to the T7virus minor capsid protein family. As to quaternary structure, interacts with the connector protein and the major capsid protein.

Its subcellular location is the virion. Its function is as follows. Assembles with the major capsid protein to form an icosahedral capsid with a T=7 symmetry, about 60 nm in diameter, and consisting of 415 capsid proteins. The major and minor capsid proteins are incorporated into the capsid in about a 90/10 ratio respectively. Once the capsid is formed, encapsidates one single copy of the viral genome. This Escherichia coli (Bacteriophage T3) protein is Minor capsid protein (10).